The chain runs to 61 residues: Short neurotoxin 1 (61 aa).

4 disulfides stabilise this stretch: Cys-3/Cys-23, Cys-17/Cys-40, Cys-42/Cys-53, and Cys-54/Cys-59.

It belongs to the three-finger toxin family. Short-chain subfamily. Type I alpha-neurotoxin sub-subfamily. Expressed by the venom gland.

Its subcellular location is the secreted. Binds to muscle nicotinic acetylcholine receptor (nAChR) and inhibit acetylcholine from binding to the receptor, thereby impairing neuromuscular transmission. The chain is Short neurotoxin 1 from Naja philippinensis (Philippine cobra).